A 24-amino-acid chain; its full sequence is M-poneritoxin-Ng2b (24 aa).

A Leucine amide modification is found at Leu24.

In terms of tissue distribution, expressed by the venom gland.

The protein resides in the secreted. Has a broad spectrum of activity against both Gram-positive and Gram-negative bacteria. Is inactive against yeast, erythrocytes, and insects. This Neoponera goeldii (Ponerine ant) protein is M-poneritoxin-Ng2b.